Reading from the N-terminus, the 422-residue chain is Glutamate 2,3-aminomutase (422 aa).

The 222-residue stretch at 150-371 (RRYPDRLIIN…AIPTYIVNAP (222 aa)) folds into the Radical SAM core domain. [4Fe-4S] cluster contacts are provided by cysteine 164, cysteine 168, and cysteine 171. Lysine 376 bears the N6-(pyridoxal phosphate)lysine mark.

The protein belongs to the radical SAM superfamily. Pyridoxal 5'-phosphate serves as cofactor. It depends on [4Fe-4S] cluster as a cofactor.

The enzyme catalyses L-glutamate = 3-aminopentanedioate. Catalyzes the interconversion of L-glutamate and L-beta-glutamate. Does not have L-lysine 2,3-aminomutase activity. In Clostridioides difficile (strain 630) (Peptoclostridium difficile), this protein is Glutamate 2,3-aminomutase (eam).